A 317-amino-acid chain; its full sequence is Ribosomal protein L11 methyltransferase (317 aa).

Positions 158, 179, 201, and 244 each coordinate S-adenosyl-L-methionine.

This sequence belongs to the methyltransferase superfamily. PrmA family.

The protein localises to the cytoplasm. It carries out the reaction L-lysyl-[protein] + 3 S-adenosyl-L-methionine = N(6),N(6),N(6)-trimethyl-L-lysyl-[protein] + 3 S-adenosyl-L-homocysteine + 3 H(+). In terms of biological role, methylates ribosomal protein L11. The chain is Ribosomal protein L11 methyltransferase from Streptococcus pyogenes serotype M49 (strain NZ131).